The primary structure comprises 253 residues: uncharacterized protein (253 aa).

Residues 62–78 form a helical membrane-spanning segment; sequence WCSIGWSIGALIIFLVY. Residues 141-158 are compositionally biased toward low complexity; sequence TTPQTTTPEIPSSTEPQE. A disordered region spans residues 141–225; the sequence is TTPQTTTPEI…HDNQPLEERH (85 aa). The segment covering 200–216 has biased composition (acidic residues); sequence NVEDEPPPNKPEEEEDH.

The protein localises to the host membrane. This is an uncharacterized protein from Aedes vexans (Inland floodwater mosquito).